Consider the following 113-residue polypeptide: U11-theraphotoxin-Hhn1p (113 aa).

An N-terminal signal peptide occupies residues 1 to 21; sequence MNTVRVTFLLVFVLAVSLGQA. Positions 22–74 are excised as a propeptide; that stretch reads DKDENRMEMQEKTEQGKSYLDFAENLLLQKLEELEAKLLEEDSEESRNSRQKR. Residues 61 to 83 are disordered; sequence EEDSEESRNSRQKRCIGEGVPCD. 3 disulfides stabilise this stretch: C75–C90, C82–C95, and C89–C110.

The protein belongs to the neurotoxin 14 (magi-1) family. 01 (HNTX-16) subfamily. As to expression, expressed by the venom gland.

The protein resides in the secreted. Probable ion channel inhibitor. The chain is U11-theraphotoxin-Hhn1p from Cyriopagopus hainanus (Chinese bird spider).